The chain runs to 413 residues: MTTTPLSPSTPSNAQVPDIQGRFGRFGGKYVPETLMPALAELETAYQKYRHDPGFQAELQQLLRDYVGRATPLYFAERLTAHYARPDGTGAQIYLKREDLNHTGAHKINNALGQVLLAKRMGKQRIIAETGAGQHGVATATVCARFGLECVIYMGVHDMERQALNVFRMRLMGAEVRPVEAGTGTLKDATSEAIRDWVTNVETTHYILGSVAGPHPYPMMVRDFHAVIGQETRAQALEKWGGLPDILLACVGGGSNAMGLFYEFVNESSIRLIGVEAAGEGVNTEKHAATLTKGRVGVLHGAMSYLLQDEDGQVIEAHSISAGLDYPGVGPEHSYLKDVGRAEYYSVTDEQALAAFQRLSRLEGIIPALETAHAIAYLETLCPQLDGSPRIIINCSGRGDKDVQTVAKFLIPQ.

The residue at position 107 (Lys107) is an N6-(pyridoxal phosphate)lysine.

The protein belongs to the TrpB family. As to quaternary structure, tetramer of two alpha and two beta chains. The cofactor is pyridoxal 5'-phosphate.

The catalysed reaction is (1S,2R)-1-C-(indol-3-yl)glycerol 3-phosphate + L-serine = D-glyceraldehyde 3-phosphate + L-tryptophan + H2O. The protein operates within amino-acid biosynthesis; L-tryptophan biosynthesis; L-tryptophan from chorismate: step 5/5. In terms of biological role, the beta subunit is responsible for the synthesis of L-tryptophan from indole and L-serine. The protein is Tryptophan synthase beta chain of Trichormus variabilis (strain ATCC 29413 / PCC 7937) (Anabaena variabilis).